Reading from the N-terminus, the 414-residue chain is Serine hydroxymethyltransferase (414 aa).

(6S)-5,6,7,8-tetrahydrofolate contacts are provided by residues L116 and 120–122; that span reads GHL. K224 bears the N6-(pyridoxal phosphate)lysine mark. Residues E240 and 348–350 contribute to the (6S)-5,6,7,8-tetrahydrofolate site; that span reads SPF.

Belongs to the SHMT family. In terms of assembly, homodimer. Pyridoxal 5'-phosphate is required as a cofactor.

It is found in the cytoplasm. The enzyme catalyses (6R)-5,10-methylene-5,6,7,8-tetrahydrofolate + glycine + H2O = (6S)-5,6,7,8-tetrahydrofolate + L-serine. It functions in the pathway one-carbon metabolism; tetrahydrofolate interconversion. Its pathway is amino-acid biosynthesis; glycine biosynthesis; glycine from L-serine: step 1/1. Its function is as follows. Catalyzes the reversible interconversion of serine and glycine with tetrahydrofolate (THF) serving as the one-carbon carrier. This reaction serves as the major source of one-carbon groups required for the biosynthesis of purines, thymidylate, methionine, and other important biomolecules. Also exhibits THF-independent aldolase activity toward beta-hydroxyamino acids, producing glycine and aldehydes, via a retro-aldol mechanism. This chain is Serine hydroxymethyltransferase, found in Campylobacter concisus (strain 13826).